A 255-amino-acid polypeptide reads, in one-letter code: Hydroxyacylglutathione hydrolase (255 aa).

Zn(2+) contacts are provided by H56, H58, D60, H61, H114, D133, and H171.

This sequence belongs to the metallo-beta-lactamase superfamily. Glyoxalase II family. Monomer. Requires Zn(2+) as cofactor.

It carries out the reaction an S-(2-hydroxyacyl)glutathione + H2O = a 2-hydroxy carboxylate + glutathione + H(+). It functions in the pathway secondary metabolite metabolism; methylglyoxal degradation; (R)-lactate from methylglyoxal: step 2/2. Its function is as follows. Thiolesterase that catalyzes the hydrolysis of S-D-lactoyl-glutathione to form glutathione and D-lactic acid. The protein is Hydroxyacylglutathione hydrolase of Bradyrhizobium diazoefficiens (strain JCM 10833 / BCRC 13528 / IAM 13628 / NBRC 14792 / USDA 110).